Consider the following 171-residue polypeptide: 6,7-dimethyl-8-ribityllumazine synthase (171 aa).

5-amino-6-(D-ribitylamino)uracil contacts are provided by residues F30, A64–E66, and A88–I90. Residue E93 to T94 participates in (2S)-2-hydroxy-3-oxobutyl phosphate binding. H96 acts as the Proton donor in catalysis. 5-amino-6-(D-ribitylamino)uracil is bound at residue N121. R135 provides a ligand contact to (2S)-2-hydroxy-3-oxobutyl phosphate.

The protein belongs to the DMRL synthase family.

The catalysed reaction is (2S)-2-hydroxy-3-oxobutyl phosphate + 5-amino-6-(D-ribitylamino)uracil = 6,7-dimethyl-8-(1-D-ribityl)lumazine + phosphate + 2 H2O + H(+). It participates in cofactor biosynthesis; riboflavin biosynthesis; riboflavin from 2-hydroxy-3-oxobutyl phosphate and 5-amino-6-(D-ribitylamino)uracil: step 1/2. Its function is as follows. Catalyzes the formation of 6,7-dimethyl-8-ribityllumazine by condensation of 5-amino-6-(D-ribitylamino)uracil with 3,4-dihydroxy-2-butanone 4-phosphate. This is the penultimate step in the biosynthesis of riboflavin. The chain is 6,7-dimethyl-8-ribityllumazine synthase from Polynucleobacter necessarius subsp. necessarius (strain STIR1).